The sequence spans 552 residues: Urocanate hydratase (552 aa).

Residues 49–50 (GG), Gln-127, 173–175 (GMG), Asp-193, 239–240 (NA), 260–264 (QTSAH), 270–271 (YI), and Tyr-319 contribute to the NAD(+) site. Cys-407 is an active-site residue. Gly-489 contributes to the NAD(+) binding site.

Belongs to the urocanase family. Requires NAD(+) as cofactor.

The protein resides in the cytoplasm. The catalysed reaction is 4-imidazolone-5-propanoate = trans-urocanate + H2O. It functions in the pathway amino-acid degradation; L-histidine degradation into L-glutamate; N-formimidoyl-L-glutamate from L-histidine: step 2/3. Catalyzes the conversion of urocanate to 4-imidazolone-5-propionate. The protein is Urocanate hydratase of Bacillus cereus (strain ATCC 10987 / NRS 248).